The primary structure comprises 489 residues: Lysine--tRNA ligase (489 aa).

Glu-399 and Glu-406 together coordinate Mg(2+).

The protein belongs to the class-II aminoacyl-tRNA synthetase family. In terms of assembly, homodimer. It depends on Mg(2+) as a cofactor.

The protein localises to the cytoplasm. It catalyses the reaction tRNA(Lys) + L-lysine + ATP = L-lysyl-tRNA(Lys) + AMP + diphosphate. In Synechococcus sp. (strain CC9311), this protein is Lysine--tRNA ligase.